The following is a 94-amino-acid chain: Co-chaperonin GroES (94 aa).

The protein belongs to the GroES chaperonin family. As to quaternary structure, heptamer of 7 subunits arranged in a ring. Interacts with the chaperonin GroEL.

Its subcellular location is the cytoplasm. Functionally, together with the chaperonin GroEL, plays an essential role in assisting protein folding. The GroEL-GroES system forms a nano-cage that allows encapsulation of the non-native substrate proteins and provides a physical environment optimized to promote and accelerate protein folding. GroES binds to the apical surface of the GroEL ring, thereby capping the opening of the GroEL channel. The protein is Co-chaperonin GroES of Latilactobacillus sakei subsp. sakei (strain 23K) (Lactobacillus sakei subsp. sakei).